The following is an 86-amino-acid chain: Omega-theraphotoxin-Hhn1c (86 aa).

A signal peptide spans 1–21; the sequence is MKSIVFVALFGLALLAVVCSA. Residues 22-50 constitute a propeptide that is removed on maturation; that stretch reads SEDAHKELLKEVVRAMVVDKTDAVQAEER. 3 cysteine pairs are disulfide-bonded: Cys52/Cys66, Cys59/Cys71, and Cys65/Cys78.

The protein belongs to the neurotoxin 10 (Hwtx-1) family. 17 (Hntx-9) subfamily. In terms of tissue distribution, expressed by the venom gland.

It localises to the secreted. Functionally, ion channel inhibitor. This chain is Omega-theraphotoxin-Hhn1c, found in Cyriopagopus hainanus (Chinese bird spider).